A 361-amino-acid polypeptide reads, in one-letter code: uncharacterized protein (361 aa).

An N-terminal signal peptide occupies residues 1–28; it reads MSKSKFTKIIVVICIAAMFITGTSILSF.

This is an uncharacterized protein from Ruminiclostridium cellulolyticum (strain ATCC 35319 / DSM 5812 / JCM 6584 / H10) (Clostridium cellulolyticum).